The primary structure comprises 375 residues: Arabinose metabolism transcriptional repressor (375 aa).

The HTH gntR-type domain maps to M1–R70. The H-T-H motif DNA-binding region spans E30–D49.

The protein localises to the cytoplasm. Functionally, transcriptional repressor of the arabinose utilization genes. The chain is Arabinose metabolism transcriptional repressor (araR) from Halalkalibacterium halodurans (strain ATCC BAA-125 / DSM 18197 / FERM 7344 / JCM 9153 / C-125) (Bacillus halodurans).